A 164-amino-acid polypeptide reads, in one-letter code: Peptidyl-prolyl cis-trans isomerase A (164 aa).

At M1 the chain carries N-acetylmethionine. V2 carries the N-acetylvaline; in Peptidyl-prolyl cis-trans isomerase A, N-terminally processed modification. Positions 7 to 163 (FFDIAVDGEP…KKITIADCGQ (157 aa)) constitute a PPIase cyclophilin-type domain. K28 bears the N6-acetyllysine; alternate mark. K28 participates in a covalent cross-link: Glycyl lysine isopeptide (Lys-Gly) (interchain with G-Cter in SUMO2); alternate. Residue K28 forms a Glycyl lysine isopeptide (Lys-Gly) (interchain with G-Cter in ubiquitin); alternate linkage. N6-acetyllysine occurs at positions 44 and 76. Cysteines 62 and 161 form a disulfide. Phosphoserine is present on S77. K82 carries the N6-acetyllysine; alternate modification. K82 is covalently cross-linked (Glycyl lysine isopeptide (Lys-Gly) (interchain with G-Cter in SUMO2); alternate). T93 carries the phosphothreonine modification. N-linked (GlcNAc...) asparagine glycosylation is present at N108. N6-acetyllysine is present on residues K125, K131, and K133.

This sequence belongs to the cyclophilin-type PPIase family. PPIase A subfamily. In terms of assembly, interacts with protein phosphatase PPP3CA/calcineurin A. Interacts with isoform 2 of BSG/CD147. Interacts with FOXO1; the interaction promotes FOXO1 dephosphorylation, nuclear accumulation and transcriptional activity. Interacts with integrin ITGA2B:ITGB3; the interaction is ROS and peptidyl-prolyl cis-trans isomerase (PPIase) activity-dependent and is increased in the presence of thrombin. Interacts with MAP3K5. Interacts with TARDBP; the interaction is dependent on the RNA-binding activity of TARDBP and the PPIase activity of PPIA/CYPA and the acetylation of PPIA/CYPA at Lys-125 favors the interaction. Interacts with HNRNPA1, HNRNPA2B1, HNRNPC, RBMX, HNRNPK and HNRNPM. Acetylation at Lys-125 markedly inhibits catalysis of cis to trans isomerization. PPIA acetylation also antagonizes the immunosuppressive effects of cyclosporine by inhibiting the sequential steps of cyclosporine binding and calcineurin inhibition. Acetylation at Lys-125 favors the interaction with TARDBP.

It is found in the cytoplasm. The protein localises to the secreted. Its subcellular location is the nucleus. It carries out the reaction [protein]-peptidylproline (omega=180) = [protein]-peptidylproline (omega=0). With respect to regulation, binds cyclosporin A (CsA). CsA mediates some of its effects via an inhibitory action on PPIase. Its function is as follows. Catalyzes the cis-trans isomerization of proline imidic peptide bonds in oligopeptides. Exerts a strong chemotactic effect on leukocytes partly through activation of one of its membrane receptors BSG/CD147, initiating a signaling cascade that culminates in MAPK/ERK activation. Activates endothelial cells (ECs) in a proinflammatory manner by stimulating activation of NF-kappa-B and ERK, JNK and p38 MAP-kinases and by inducing expression of adhesion molecules including SELE and VCAM1. Induces apoptosis in ECs by promoting the FOXO1-dependent expression of CCL2 and BCL2L11 which are involved in EC chemotaxis and apoptosis. In response to oxidative stress, initiates proapoptotic and antiapoptotic signaling in ECs via activation of NF-kappa-B and AKT1 and up-regulation of antiapoptotic protein BCL2. Negatively regulates MAP3K5/ASK1 kinase activity, autophosphorylation and oxidative stress-induced apoptosis mediated by MAP3K5/ASK1. Necessary for the assembly of TARDBP in heterogeneous nuclear ribonucleoprotein (hnRNP) complexes and regulates TARDBP binding to RNA UG repeats and TARDBP-dependent expression of HDAC6, ATG7 and VCP which are involved in clearance of protein aggregates. Plays an important role in platelet activation and aggregation. Regulates calcium mobilization and integrin ITGA2B:ITGB3 bidirectional signaling via increased ROS production as well as by facilitating the interaction between integrin and the cell cytoskeleton. Binds heparan sulfate glycosaminoglycans. The sequence is that of Peptidyl-prolyl cis-trans isomerase A (PPIA) from Bos taurus (Bovine).